The chain runs to 272 residues: Orotidine 5'-phosphate decarboxylase (272 aa).

K95 serves as the catalytic Proton donor.

This sequence belongs to the OMP decarboxylase family. Type 2 subfamily.

The catalysed reaction is orotidine 5'-phosphate + H(+) = UMP + CO2. The protein operates within pyrimidine metabolism; UMP biosynthesis via de novo pathway; UMP from orotate: step 2/2. This is Orotidine 5'-phosphate decarboxylase from Bordetella petrii (strain ATCC BAA-461 / DSM 12804 / CCUG 43448).